The sequence spans 220 residues: Probable nicotinate-nucleotide adenylyltransferase (220 aa).

This sequence belongs to the NadD family.

The catalysed reaction is nicotinate beta-D-ribonucleotide + ATP + H(+) = deamido-NAD(+) + diphosphate. It participates in cofactor biosynthesis; NAD(+) biosynthesis; deamido-NAD(+) from nicotinate D-ribonucleotide: step 1/1. In terms of biological role, catalyzes the reversible adenylation of nicotinate mononucleotide (NaMN) to nicotinic acid adenine dinucleotide (NaAD). This is Probable nicotinate-nucleotide adenylyltransferase from Yersinia pseudotuberculosis serotype O:1b (strain IP 31758).